We begin with the raw amino-acid sequence, 492 residues long: Probable sphingolipid transporter spinster homolog 1 (492 aa).

A helical membrane pass occupies residues 29 to 49; that stretch reads FVTILCIINLINYVDRGVIAS. N-linked (GlcNAc...) asparagine glycosylation is found at Asn-53 and Asn-76. A run of 7 helical transmembrane segments spans residues 83 to 103, 119 to 139, 141 to 161, 169 to 189, 200 to 220, 279 to 299, and 317 to 337; these read GLLS…FAGL, VWTI…IAVF, MFVG…IDDS, FWLG…YVFG, WAFY…FCIK, VFIV…AYSY, and IFGG…SYVL. N-linked (GlcNAc...) asparagine glycosylation is present at Asn-341. Helical transmembrane passes span 348–368, 372–392, 407–427, and 442–462; these read FKLL…AFLM, YAFI…QAPV, LSMA…SSPL, and TLII…GIFM. Ser-472 is modified (phosphoserine). The segment covering 472 to 481 has biased composition (acidic residues); the sequence is SEDDEVEEDK. The disordered stretch occupies residues 472–492; that stretch reads SEDDEVEEDKLESKTENSTLA. A glycan (N-linked (GlcNAc...) asparagine) is linked at Asn-488.

This sequence belongs to the major facilitator superfamily. Spinster (TC 2.A.1.49) family.

The protein resides in the late endosome membrane. It localises to the lysosome membrane. Probable sphingolipid transporter that plays a central role in endosomes and/or lysosomes storage. The polypeptide is Probable sphingolipid transporter spinster homolog 1 (Arabidopsis thaliana (Mouse-ear cress)).